Consider the following 658-residue polypeptide: Putative phospholipase B-like lamina ancestor (658 aa).

An N-terminal signal peptide occupies residues 1–29; sequence MLKVVGASWQKTRIGTYILIGAGLLVIGA. Residues N229, N465, and N486 are each glycosylated (N-linked (GlcNAc...) asparagine).

This sequence belongs to the phospholipase B-like family. In terms of tissue distribution, expressed in neural and glial progenitors prior to, but not after, differentiation. Not expressed in late third instar disks, but is expressed uniformly by early third instar disks, in the imaginal ring of the proventriculus and in the salivary gland.

It is found in the secreted. In terms of biological role, putative phospholipase. Involved in the regulation of cellular plasticity in imaginal disks. This is Putative phospholipase B-like lamina ancestor (lama) from Drosophila melanogaster (Fruit fly).